A 442-amino-acid chain; its full sequence is Magnesium transporter MRS2-1 (442 aa).

The interval 1 to 30 is disordered; it reads MSELKERLLPPRPASAMNLRDASVTRPSAS. A run of 2 helical transmembrane segments spans residues 378–398 and 414–434; these read LLLT…GIFG and WVLI…VWFF. Positions 398–400 match the Required for magnesium transport activity motif; that stretch reads GMN.

The protein belongs to the CorA metal ion transporter (MIT) (TC 1.A.35.5) family. In terms of tissue distribution, expressed in the whole plant except stems.

The protein resides in the membrane. Its function is as follows. Magnesium transporter that may mediate the influx of magnesium. This is Magnesium transporter MRS2-1 (MRS2-1) from Arabidopsis thaliana (Mouse-ear cress).